The following is a 286-amino-acid chain: Deleted in azoospermia-like-A (286 aa).

Positions 33 to 114 (NTVFVGGIDI…PAIRKICTYV (82 aa)) constitute an RRM domain. One can recognise a DAZ domain in the interval 155 to 180 (ACPYPSSPPMAIQQIPVGCQQPGYFQ).

The protein belongs to the RRM DAZ family. In terms of assembly, interacts with the C-terminus of pabp1 and with epabp. Prior to oocyte maturation, found in a complex with epabp and pum2 proteins and spdy1 mRNA; pum2 dissociates from the complex during maturation. In terms of tissue distribution, germ-line specific. Oocyte mRNA expression is first restricted to the granulo-fibrillar material (GFM) of the mitochondrial cloud and then to the oocyte germ plasm at the vegetal cortex. Remains an mRNA component of the germ plasm until the neurula stage. In 2-8 cell embryos, expressed in the germ plasm matrix between germinal granules and mitochondria. Expressed in primordial germ cells (PGCs) later in embryogenesis. In addition to the ovaries of adult females, expressed in the testis of adult and juvenile males in spermatogonia and spermatocytes. The protein is restricted to the embryonic germ plasm and primordial germ cells.

The protein localises to the cytoplasm. Its function is as follows. RNA-binding protein that is required for primordial germ cell (PGC) differentiation and indirectly necessary for the migration of PGCs through the endoderm. May promote meiotic cell division during spermatogenesis. Shows a preference for G- and U-rich RNAs and probably binds the 3'-UTR of target mRNAs. Stimulates the initiation of translation of mRNAs through the recruitment of poly(A)-binding proteins (PABPs). This chain is Deleted in azoospermia-like-A (dazl-a), found in Xenopus laevis (African clawed frog).